The primary structure comprises 444 residues: Endothelin-3 receptor (444 aa).

An N-terminal signal peptide occupies residues 1–18; the sequence is MATVILFVAWMACLMVGV. Topologically, residues 19 to 88 are extracellular; sequence CYQEFQTQQN…SRAKIRHAFK (70 aa). Asparagine 60 is a glycosylation site (N-linked (GlcNAc...) asparagine). Residues 89–113 traverse the membrane as a helical segment; sequence YVTTILSCVIFLVGIVGNSTLLRII. Residues 114–124 are Cytoplasmic-facing; sequence YKNKCMRNGPN. A helical transmembrane segment spans residues 125 to 145; it reads VLIASLALGDLFYILIAIPII. The Extracellular portion of the chain corresponds to 146–161; it reads SISFWLSTGHSEYIYQ. Residues 162–180 traverse the membrane as a helical segment; sequence LVHLYRARVYSLSLCALSI. The Cytoplasmic segment spans residues 181–201; sequence DRYRAVASWNRIRSIGIPVRK. The chain crosses the membrane as a helical span at residues 202 to 226; sequence AIELTLIWAVAIIVAVPEAIAFNLV. At 227-254 the chain is on the extracellular side; sequence ELDFRGQTILVCMLPMEQTSDFMRFYQE. The chain crosses the membrane as a helical span at residues 255–279; sequence VKVWWLFGFYFCLPLACTGVFYTLM. Topologically, residues 280 to 307 are cytoplasmic; it reads SCEMLSIKNGMRIALNDHMKQRREVAKT. A helical membrane pass occupies residues 308–328; it reads VFCLVVIFALCWLPLHVSSIF. At 329–365 the chain is on the extracellular side; it reads VRLSATVKRACILKNKRSCIMAEIQTGVNYQLLMVMN. Residues 366–386 traverse the membrane as a helical segment; sequence YTGINMASLNSCIGPVALYFV. Over 387-444 the chain is Cytoplasmic; it reads SRKFKNCFQSCLCCWCHRPTLTITPMDEKGSGGKWKANGHDLDLDRSSSRLSNKYSSS. Positions 416-444 are disordered; sequence GSGGKWKANGHDLDLDRSSSRLSNKYSSS. A compositionally biased stretch (basic and acidic residues) spans 424–434; sequence NGHDLDLDRSS. Positions 435-444 are enriched in low complexity; it reads SRLSNKYSSS.

The protein belongs to the G-protein coupled receptor 1 family. Endothelin receptor subfamily.

Its subcellular location is the cell membrane. Functionally, receptor for endothelin-3. Mediates its action by association with G proteins that activate a phosphatidylinositol-calcium second messenger system. This is Endothelin-3 receptor from Xenopus laevis (African clawed frog).